The following is a 206-amino-acid chain: Ribosomal RNA large subunit methyltransferase E (206 aa).

S-adenosyl-L-methionine contacts are provided by glycine 60, tryptophan 62, aspartate 80, aspartate 96, and aspartate 121. Lysine 161 (proton acceptor) is an active-site residue.

Belongs to the class I-like SAM-binding methyltransferase superfamily. RNA methyltransferase RlmE family.

The protein resides in the cytoplasm. The enzyme catalyses uridine(2552) in 23S rRNA + S-adenosyl-L-methionine = 2'-O-methyluridine(2552) in 23S rRNA + S-adenosyl-L-homocysteine + H(+). Its function is as follows. Specifically methylates the uridine in position 2552 of 23S rRNA at the 2'-O position of the ribose in the fully assembled 50S ribosomal subunit. In Legionella pneumophila (strain Paris), this protein is Ribosomal RNA large subunit methyltransferase E.